Reading from the N-terminus, the 237-residue chain is Uridylate kinase (237 aa).

12–15 (KLSG) is a binding site for ATP. Positions 20-25 (GEDGLG) are involved in allosteric activation by GTP. Glycine 54 provides a ligand contact to UMP. 2 residues coordinate ATP: glycine 55 and arginine 59. UMP-binding positions include aspartate 74 and 135–142 (TGNPFFTT). The ATP site is built by threonine 162, tyrosine 168, and aspartate 171.

The protein belongs to the UMP kinase family. Homohexamer.

The protein localises to the cytoplasm. The enzyme catalyses UMP + ATP = UDP + ADP. The protein operates within pyrimidine metabolism; CTP biosynthesis via de novo pathway; UDP from UMP (UMPK route): step 1/1. Its activity is regulated as follows. Allosterically activated by GTP. Inhibited by UTP. In terms of biological role, catalyzes the reversible phosphorylation of UMP to UDP. The polypeptide is Uridylate kinase (pyrH) (Haemophilus influenzae (strain ATCC 51907 / DSM 11121 / KW20 / Rd)).